The primary structure comprises 156 residues: Small ribosomal subunit protein uS7 (156 aa).

It belongs to the universal ribosomal protein uS7 family. As to quaternary structure, part of the 30S ribosomal subunit. Contacts proteins S9 and S11.

Functionally, one of the primary rRNA binding proteins, it binds directly to 16S rRNA where it nucleates assembly of the head domain of the 30S subunit. Is located at the subunit interface close to the decoding center, probably blocks exit of the E-site tRNA. This Maridesulfovibrio salexigens (strain ATCC 14822 / DSM 2638 / NCIMB 8403 / VKM B-1763) (Desulfovibrio salexigens) protein is Small ribosomal subunit protein uS7.